We begin with the raw amino-acid sequence, 364 residues long: Heat-inducible transcription repressor HrcA (364 aa).

Belongs to the HrcA family.

Its function is as follows. Negative regulator of class I heat shock genes (grpE-dnaK-dnaJ and groELS operons). Prevents heat-shock induction of these operons. This is Heat-inducible transcription repressor HrcA from Cyanothece sp. (strain PCC 7425 / ATCC 29141).